The following is a 171-amino-acid chain: Mitoferrin-1 (171 aa).

Residues 1–40 (MELRRGGVGSQARARRMDGDSRDGGGGCKDAGSEDYENLP) form a disordered region. A Solcar repeat occupies 43–131 (ASLSTHMTAG…FACYENMKRT (89 aa)). 3 helical membrane passes run 45-64 (LSTH…SVMY), 105-125 (RGLN…FACY), and 143-163 (HLAN…PSTD).

It belongs to the mitochondrial carrier (TC 2.A.29) family. In terms of assembly, interacts with ACB10; this interaction stabilizes SLC25A37 and enhances the function of SLC25A37 to import mitochondrial iron during erythroid differentiation.

The protein localises to the mitochondrion inner membrane. It carries out the reaction Fe(2+)(in) = Fe(2+)(out). Mitochondrial iron transporter that specifically mediates iron uptake in developing erythroid cells, thereby playing an essential role in heme biosynthesis. This chain is Mitoferrin-1 (SLC25A37), found in Bos taurus (Bovine).